A 678-amino-acid chain; its full sequence is Glycine--tRNA ligase beta subunit (678 aa).

This sequence belongs to the class-II aminoacyl-tRNA synthetase family. Tetramer of two alpha and two beta subunits.

The protein localises to the cytoplasm. It catalyses the reaction tRNA(Gly) + glycine + ATP = glycyl-tRNA(Gly) + AMP + diphosphate. This chain is Glycine--tRNA ligase beta subunit, found in Streptococcus pneumoniae serotype 19F (strain G54).